A 79-amino-acid polypeptide reads, in one-letter code: Moronecidin (79 aa).

The first 22 residues, methionine 1–alanine 22, serve as a signal peptide directing secretion. Residue glycine 44 is modified to Glycine amide. Residues glycine 45–tyrosine 68 form a disordered region. Residues alanine 47 to aspartate 79 constitute a propeptide that is removed on maturation. The segment covering glutamine 52 to tyrosine 68 has biased composition (low complexity).

As to expression, expressed in gill, skin, intestine, spleen, anterior kidney, and blood cells.

It localises to the secreted. Functionally, antimicrobial peptide with broad-spectrum activity against Gram-positive and Gram-negative bacteria as well as against a variety of fungi. Rapidly inactivates both channel catfish herpesvirus (ED(50)=4 uM) and frog virus 3 (ED(50)=13 uM) over a wide temperature range. Seems to disrupt the membranes by adopting an alpha helical conformation. This is Moronecidin from Morone chrysops (White bass).